The primary structure comprises 109 residues: MKVLVLFSVLFLTLFSYSSTEAIDELDSDAEEDMLSLMANEQVRAKACTPRLHDCSHDRHSCCRGELFKDVCYCFYPEGEDKTEVCSCQQPKSHKYIEKVVDKAKTVVG.

The N-terminal stretch at 1 to 22 (MKVLVLFSVLFLTLFSYSSTEA) is a signal peptide. Positions 23-44 (IDELDSDAEEDMLSLMANEQVR) are excised as a propeptide. The knottin domain stretch occupies residues 45–88 (AKACTPRLHDCSHDRHSCCRGELFKDVCYCFYPEGEDKTEVCSC). Intrachain disulfides connect cysteine 48/cysteine 63, cysteine 55/cysteine 72, cysteine 62/cysteine 88, and cysteine 74/cysteine 86. Residues 89 to 108 (QQPKSHKYIEKVVDKAKTVV) form a linear cationic cytotoxin domain region.

This sequence belongs to the neurotoxin 19 (CSTX) family. 05 (U4-Lctx) subfamily. Expressed by the venom gland.

The protein resides in the secreted. In terms of biological role, enhances the high-affinity desensitization of human P2RX3 purinoceptors. This is U4-lycotoxin-Ls1a from Lycosa singoriensis (Wolf spider).